A 211-amino-acid chain; its full sequence is Pyridoxine/pyridoxamine 5'-phosphate oxidase (211 aa).

Substrate is bound by residues 8 to 11 (RRDY) and Lys66. FMN-binding positions include 61 to 66 (RLVLLK), 76 to 77 (FT), Arg82, Lys83, and Gln105. Residues Tyr123, Arg127, and Ser131 each contribute to the substrate site. Residues 140–141 (QS) and Trp184 contribute to the FMN site. Substrate is bound at residue 190–192 (RLH). Arg194 serves as a coordination point for FMN.

The protein belongs to the pyridoxamine 5'-phosphate oxidase family. In terms of assembly, homodimer. Requires FMN as cofactor.

The catalysed reaction is pyridoxamine 5'-phosphate + O2 + H2O = pyridoxal 5'-phosphate + H2O2 + NH4(+). The enzyme catalyses pyridoxine 5'-phosphate + O2 = pyridoxal 5'-phosphate + H2O2. It functions in the pathway cofactor metabolism; pyridoxal 5'-phosphate salvage; pyridoxal 5'-phosphate from pyridoxamine 5'-phosphate: step 1/1. It participates in cofactor metabolism; pyridoxal 5'-phosphate salvage; pyridoxal 5'-phosphate from pyridoxine 5'-phosphate: step 1/1. Its function is as follows. Catalyzes the oxidation of either pyridoxine 5'-phosphate (PNP) or pyridoxamine 5'-phosphate (PMP) into pyridoxal 5'-phosphate (PLP). This Thermosynechococcus vestitus (strain NIES-2133 / IAM M-273 / BP-1) protein is Pyridoxine/pyridoxamine 5'-phosphate oxidase.